The primary structure comprises 230 residues: uncharacterized protein (230 aa).

Residues 1 to 11 (MPVPSVTVTTD) show a composition bias toward polar residues. Positions 1-88 (MPVPSVTVTT…TLKRPTSNSI (88 aa)) are disordered. Positions 63 to 73 (DDQHRHSDVHS) are enriched in basic and acidic residues. Positions 79–88 (TLKRPTSNSI) are enriched in polar residues. At Ser-106 the chain carries Phosphoserine. Basic and acidic residues predominate over residues 156–179 (LKREDSRVSSTKKEHINDHTDMHS). The interval 156–203 (LKREDSRVSSTKKEHINDHTDMHSTRSKVTTNSQGSSLEPNKLNMAVE) is disordered. Residues 182–194 (SKVTTNSQGSSLE) are compositionally biased toward polar residues.

This is an uncharacterized protein from Saccharomyces cerevisiae (strain ATCC 204508 / S288c) (Baker's yeast).